Consider the following 1921-residue polypeptide: Mediator of RNA polymerase II transcription subunit 13 (1921 aa).

Residues K220 and K226 each participate in a glycyl lysine isopeptide (Lys-Gly) (interchain with G-Cter in ubiquitin) cross-link. Disordered regions lie at residues 400 to 434 (YEKN…TSRT), 702 to 724 (TQVE…NSST), and 1485 to 1528 (SPTF…GDVS). The segment covering 407–427 (SSGSSRNSSISSTSSASSGSG) has biased composition (low complexity). 2 stretches are compositionally biased toward polar residues: residues 1486 to 1496 (PTFTSLGSESS) and 1515 to 1527 (EGIT…QGDV).

This sequence belongs to the Mediator complex subunit 13 family. In terms of assembly, component of the Mediator complex. Interacts with CYCC1-2 (CDK8 homolog). As to expression, ubiquitous. Highest expression in the shoot apex.

It is found in the nucleus. Its function is as follows. Component of the Mediator complex, a coactivator involved in the regulated transcription of nearly all RNA polymerase II-dependent genes. Mediator functions as a bridge to convey information from gene-specific regulatory proteins to the basal RNA polymerase II transcription machinery. The Mediator complex, having a compact conformation in its free form, is recruited to promoters by direct interactions with regulatory proteins and serves for the assembly of a functional preinitiation complex with RNA polymerase II and the general transcription factors. Acts closely together with MAB12. Involved in the regulation of embryo patterning and cotyledon organogenesis. May act through transient repression of specific genes such as the ones responsive to auxin. This Arabidopsis thaliana (Mouse-ear cress) protein is Mediator of RNA polymerase II transcription subunit 13 (MED13).